The primary structure comprises 1154 residues: Nitric oxide synthase, inducible (1154 aa).

The interval 22 to 58 (KDINNNVEKPPGATPSPSTQDDLKNHKHHNDSPQPLT) is disordered. A DINNN-motif; mediates interaction with SPSB1, SPSB2 and SPSB4 motif is present at residues 23–27 (DINNN). Zn(2+)-binding residues include C107 and C112. Heme b is bound at residue C197. Positions 260, 369, 370, and 374 each coordinate L-arginine. 4 residues coordinate (6R)-L-erythro-5,6,7,8-tetrahydrobiopterin: R378, I459, W460, and F473. Y488 contacts heme b. The tract at residues 512 to 532 (LKVLVKAVLFASMLMRKTMAS) is calmodulin-binding. A Flavodoxin-like domain is found at 536–674 (VTILFATETG…AFRCWAVQTF (139 aa)). T542, E543, T544, K546, and S547 together coordinate FMN. Y572 is subject to Phosphotyrosine. 5 residues coordinate FMN: S588, T589, S625, C632, and E658. An FAD-binding FR-type domain is found at 727-967 (KNVFTLRLKS…VRSAGNFKLP (241 aa)). R747 serves as a coordination point for NADP(+). FAD contacts are provided by H769, R903, Y905, S906, T921, A923, Y927, V940, C941, and S942. Residues T981, R1014, S1043, R1044, K1050, Y1052, Q1054, and D1087 each contribute to the NADP(+) site.

This sequence belongs to the NOS family. In terms of assembly, homodimer. Interacts with NHERF1. Interacts with GAPDH; induced by oxidatively-modified low-densitity lipoprotein (LDL(ox)). Interacts with S100A8 and S100A9 to form the iNOS-S100A8/9 transnitrosylase complex. Interacts with SPSB1, SPSB2 and SPSB4. Interacts with ELOC and CUL5 in the presence of SPSB1 or SPSB2 or SPSB4. Forms a complex with ASL, ASS1 and HSP90AA1; the complex regulates cell-autonomous L-arginine synthesis and citrulline recycling while channeling extracellular L-arginine to nitric oxide synthesis pathway. Heme b is required as a cofactor. FAD serves as cofactor. Requires FMN as cofactor. The cofactor is (6R)-L-erythro-5,6,7,8-tetrahydrobiopterin. In terms of processing, polyubiquitinated; mediated by SPSB1, SPSB2 and SPSB4, leading to proteasomal degradation.

It is found in the cytoplasm. The protein localises to the cytosol. It carries out the reaction 2 L-arginine + 3 NADPH + 4 O2 + H(+) = 2 L-citrulline + 2 nitric oxide + 3 NADP(+) + 4 H2O. Regulated by calcium/calmodulin. Its function is as follows. Produces nitric oxide (NO) which is a messenger molecule with diverse functions throughout the body. In macrophages, NO mediates tumoricidal and bactericidal actions. Also has nitrosylase activity and mediates cysteine S-nitrosylation of cytoplasmic target proteins such PTGS2/COX2. As component of the iNOS-S100A8/9 transnitrosylase complex involved in the selective inflammatory stimulus-dependent S-nitrosylation of GAPDH implicated in regulation of the GAIT complex activity and probably multiple targets including ANXA5, EZR, MSN and VIM. Involved in inflammation, enhances the synthesis of pro-inflammatory mediators such as IL6 and IL8. In Canis lupus familiaris (Dog), this protein is Nitric oxide synthase, inducible (NOS2).